The primary structure comprises 1342 residues: DNA-directed RNA polymerase subunit beta (1342 aa).

The protein belongs to the RNA polymerase beta chain family. In terms of assembly, the RNAP catalytic core consists of 2 alpha, 1 beta, 1 beta' and 1 omega subunit. When a sigma factor is associated with the core the holoenzyme is formed, which can initiate transcription.

The enzyme catalyses RNA(n) + a ribonucleoside 5'-triphosphate = RNA(n+1) + diphosphate. In terms of biological role, DNA-dependent RNA polymerase catalyzes the transcription of DNA into RNA using the four ribonucleoside triphosphates as substrates. In Pseudoalteromonas atlantica (strain T6c / ATCC BAA-1087), this protein is DNA-directed RNA polymerase subunit beta.